We begin with the raw amino-acid sequence, 497 residues long: Acetyl-coenzyme A carboxylase carboxyl transferase subunit beta, chloroplastic (497 aa).

The CoA carboxyltransferase N-terminal domain occupies Leu230–Lys497. Zn(2+)-binding residues include Cys234, Cys237, Cys253, and Cys256. The C4-type zinc-finger motif lies at Cys234–Cys256.

This sequence belongs to the AccD/PCCB family. As to quaternary structure, acetyl-CoA carboxylase is a heterohexamer composed of biotin carboxyl carrier protein, biotin carboxylase and 2 subunits each of ACCase subunit alpha and ACCase plastid-coded subunit beta (accD). The cofactor is Zn(2+).

The protein localises to the plastid. It localises to the chloroplast stroma. The catalysed reaction is N(6)-carboxybiotinyl-L-lysyl-[protein] + acetyl-CoA = N(6)-biotinyl-L-lysyl-[protein] + malonyl-CoA. It participates in lipid metabolism; malonyl-CoA biosynthesis; malonyl-CoA from acetyl-CoA: step 1/1. Its function is as follows. Component of the acetyl coenzyme A carboxylase (ACC) complex. Biotin carboxylase (BC) catalyzes the carboxylation of biotin on its carrier protein (BCCP) and then the CO(2) group is transferred by the transcarboxylase to acetyl-CoA to form malonyl-CoA. The polypeptide is Acetyl-coenzyme A carboxylase carboxyl transferase subunit beta, chloroplastic (Carica papaya (Papaya)).